The sequence spans 276 residues: Protein MGF 360-15R (276 aa).

This sequence belongs to the asfivirus MGF 360 family.

Functionally, plays a role in virus cell tropism, and may be required for efficient virus replication in macrophages. This African swine fever virus (isolate Warthog/Namibia/Wart80/1980) (ASFV) protein is Protein MGF 360-15R.